The sequence spans 92 residues: Acylphosphatase (92 aa).

A disulfide bond links Cys5 and Cys49. The region spanning 5–92 is the Acylphosphatase-like domain; it reads CIIAWIYGRV…SGELTDFRIR (88 aa). Active-site residues include Arg20 and Asn38.

The protein belongs to the acylphosphatase family.

It carries out the reaction an acyl phosphate + H2O = a carboxylate + phosphate + H(+). The protein is Acylphosphatase of Escherichia coli O1:K1 / APEC.